The chain runs to 482 residues: U2 small nuclear ribonucleoprotein auxiliary factor 35 kDa subunit-related protein 2 (482 aa).

Positions 1–59 (MAAPEKMTFPEKPSHKKYRAALKKEKRKKRRQELARLRDSGLSQKEEEEDTFIEEQQLE) are disordered. Over residues 14–31 (SHKKYRAALKKEKRKKRR) the composition is skewed to basic residues. Residue Lys45 forms a Glycyl lysine isopeptide (Lys-Gly) (interchain with G-Cter in SUMO2) linkage. Acidic residues predominate over residues 46-58 (EEEEDTFIEEQQL). Lys62 participates in a covalent cross-link: Glycyl lysine isopeptide (Lys-Gly) (interchain with G-Cter in SUMO2). The tract at residues 115–135 (QRKEREEEEQKRQEKKEKEEA) is disordered. The segment at 166–194 (EKDRANCPFYSKTGACRFGDRCSRKHNFP) adopts a C3H1-type 1 zinc-finger fold. An RRM domain is found at 198-304 (PTLLIKSMFT…RQLQCEFCPV (107 aa)). The C3H1-type 2 zinc finger occupies 306-333 (RWKMAICGLFEIQQCPRGKHCNFLHVFR). A Phosphoserine modification is found at Ser349. Residues 351–482 (DRTGSSFGKN…DRTVQSPKSK (132 aa)) form a disordered region. Basic and acidic residues-rich tracts occupy residues 360 to 375 (NSERRERMGHHDDYYS) and 383 to 398 (PSPDHSYKRNGESERK). The residue at position 384 (Ser384) is a Phosphoserine. Basic residues predominate over residues 399–412 (SSRHRGKKSHKRTS). The span at 413–435 (KSRERHNSRSRGRNRDRSRDRSR) shows a compositional bias: basic and acidic residues. Residues 436-454 (GRGSRSRSRSRSRRSRRSR) are compositionally biased toward basic residues.

In terms of assembly, component of the U11/U12 snRNPs that are part of the U12-type spliceosome. Interacts (via RS domain) with SRSF1 and SRSF2. Interacts with U2AF2/U2AF65. Post-translationally, phosphorylated in the RS domain by SRPK1. As to expression, widely expressed.

The protein localises to the nucleus. Pre-mRNA-binding protein required for splicing of both U2- and U12-type introns. Selectively interacts with the 3'-splice site of U2- and U12-type pre-mRNAs and promotes different steps in U2 and U12 intron splicing. Recruited to U12 pre-mRNAs in an ATP-dependent manner and is required for assembly of the pre-spliceosome, a precursor to other spliceosomal complexes. For U2-type introns, it is selectively and specifically required for the second step of splicing. The protein is U2 small nuclear ribonucleoprotein auxiliary factor 35 kDa subunit-related protein 2 (ZRSR2) of Homo sapiens (Human).